The following is a 107-amino-acid chain: 4-carboxymethyl-4-methylbutenolide mutase (107 aa).

The active-site Proton donor/acceptor is His26. Residues His26 and Tyr39 each contribute to the 3-methylmuconolactone site. 4-methylmuconolactone is bound by residues His26 and Tyr39.

Belongs to the MmlI family. As to quaternary structure, homodimer.

The catalysed reaction is 4-methylmuconolactone = 3-methylmuconolactone. With respect to regulation, inhibited by p-chloromercuribenzoate. Isomerase involved in the degradation of 4-methylsalicylate and 5-methylsalicylate. Catalyzes the isomerization of the dead-end metabolite 4-methylmuconolactone (4-ML) to 3-methylmuconolactone (3-ML), which can then be further degraded through a modified 3-oxoadipate pathway. Can also use 1-methylbislactone but not 3-methyl-cis,cis-muconate. This Pseudomonas reinekei protein is 4-carboxymethyl-4-methylbutenolide mutase.